The chain runs to 398 residues: Galactose-3-O-sulfotransferase 2 (398 aa).

Residues 1-11 (MLSALGGLQRC) are Cytoplasmic-facing. A helical; Signal-anchor for type II membrane protein transmembrane segment spans residues 12–29 (FWAILLLALTVSLLAGFL). Residues 30–398 (HKDVRLLMPL…PPKNIPFLGA (369 aa)) lie on the Lumenal side of the membrane. Asn-77, Asn-133, Asn-180, Asn-288, Asn-330, and Asn-360 each carry an N-linked (GlcNAc...) asparagine glycan.

It belongs to the galactose-3-O-sulfotransferase family.

The protein localises to the golgi apparatus. It is found in the golgi stack membrane. It participates in protein modification; carbohydrate sulfation. Its activity is regulated as follows. Strongly inhibited by Cu(2+) and Zn(2+). Transfers a sulfate group to the hydroxyl group at C3 of non-reducing beta-galactosyl residues. Acts both on type 1 (Gal-beta-1,3-GlcNAc) and type 2 (Gal-beta-1,4-GlcNAc) chains with similar efficiency. The chain is Galactose-3-O-sulfotransferase 2 (GAL3ST2) from Sus scrofa (Pig).